A 488-amino-acid polypeptide reads, in one-letter code: Cysteine--tRNA ligase (488 aa).

C29 serves as a coordination point for Zn(2+). The short motif at 31 to 41 (ATVQGMPHVGH) is the 'HIGH' region element. Zn(2+) is bound by residues C227, H252, and E256. Residues 283-287 (KMSKS) carry the 'KMSKS' region motif. An ATP-binding site is contributed by K286.

The protein belongs to the class-I aminoacyl-tRNA synthetase family. In terms of assembly, monomer. Zn(2+) serves as cofactor.

The protein localises to the cytoplasm. The catalysed reaction is tRNA(Cys) + L-cysteine + ATP = L-cysteinyl-tRNA(Cys) + AMP + diphosphate. The polypeptide is Cysteine--tRNA ligase (Pseudarthrobacter chlorophenolicus (strain ATCC 700700 / DSM 12829 / CIP 107037 / JCM 12360 / KCTC 9906 / NCIMB 13794 / A6) (Arthrobacter chlorophenolicus)).